Here is a 393-residue protein sequence, read N- to C-terminus: Beta-1,3-galactosyltransferase 7 (393 aa).

Residues 9–29 traverse the membrane as a helical; Signal-anchor for type II membrane protein segment; the sequence is VISLKWVPFLCISFFALGAIF. Positions 89–112 are disordered; that stretch reads SLDKSVSTLSSTRSSQEMVDGSET. The segment covering 93 to 103 has biased composition (low complexity); sequence SVSTLSSTRSS.

It belongs to the glycosyltransferase 31 family. Mn(2+) is required as a cofactor. As to expression, expressed in leaves, stems, flowers and siliques.

The protein localises to the golgi apparatus membrane. The protein operates within protein modification; protein glycosylation. In terms of biological role, beta-1,3-galactosyltransferase that transfers galactose from UDP-galactose to substrates with a terminal glycosyl residue. This is Beta-1,3-galactosyltransferase 7 (B3GALT7) from Arabidopsis thaliana (Mouse-ear cress).